The following is a 160-amino-acid chain: Large ribosomal subunit protein uL16 (160 aa).

The disordered stretch occupies residues 138–160 (KNLENSSQENTKDSKKSQEEVKQ). Residues 147–160 (NTKDSKKSQEEVKQ) show a composition bias toward basic and acidic residues.

The protein belongs to the universal ribosomal protein uL16 family. Part of the 50S ribosomal subunit.

Functionally, binds 23S rRNA and is also seen to make contacts with the A and possibly P site tRNAs. This is Large ribosomal subunit protein uL16 from Prochlorococcus marinus (strain AS9601).